We begin with the raw amino-acid sequence, 454 residues long: Nuclear envelope integral membrane protein (454 aa).

A signal peptide spans 1 to 18 (MHSAGLLMLTVAGYFTSG). Asparagine 38 is a glycosylation site (N-linked (GlcNAc...) asparagine). Helical transmembrane passes span 138–158 (IPLDLWRLAQFAVGILILFSA), 166–186 (VFYYLVGIVIGICASLLVVIY), 197–217 (MMYGVLIGGWTIGFYVIKQLA), 231–251 (VLGYLVITGLISFLICYRIGP), and 280–300 (TSAVIFIMVLVFVAHYFPISW). Over residues 388–405 (SMDAAPEEESVEEPEEDK) the composition is skewed to acidic residues. Residues 388–454 (SMDAAPEEES…QEVDLRQVVQ (67 aa)) are disordered. Polar residues predominate over residues 414-424 (NSQFRYQQAAR). Residues 428 to 446 (PEPESESDDSEEEEFFEQE) are compositionally biased toward acidic residues.

It belongs to the NEMP family. Interacts with OTE. As to expression, expressed in both germline and somatic cells in the larval testis and prepupal ovary (at protein level). Also detected in the larval eye and larval wing disk (at protein level).

The protein localises to the nucleus inner membrane. In terms of biological role, contributes to nuclear envelope stiffness in germ cells. Required for male and female fertility. In Drosophila melanogaster (Fruit fly), this protein is Nuclear envelope integral membrane protein.